Consider the following 415-residue polypeptide: Squalene synthase 3 (415 aa).

Helical transmembrane passes span 281 to 301 (AIFR…ALCY) and 392 to 412 (LIII…SNLP).

This sequence belongs to the phytoene/squalene synthase family. Mg(2+) is required as a cofactor. It depends on Mn(2+) as a cofactor.

It is found in the endoplasmic reticulum membrane. It carries out the reaction 2 (2E,6E)-farnesyl diphosphate + NADH + H(+) = squalene + 2 diphosphate + NAD(+). The enzyme catalyses 2 (2E,6E)-farnesyl diphosphate + NADPH + H(+) = squalene + 2 diphosphate + NADP(+). The protein operates within terpene metabolism; lanosterol biosynthesis; lanosterol from farnesyl diphosphate: step 1/3. Its function is as follows. Component of the triterpene saponins (e.g. ginsenosides or panaxosides) and phytosterols biosynthetic pathways. Catalyzes the biosynthesis of squalene. The polypeptide is Squalene synthase 3 (Panax ginseng (Korean ginseng)).